A 575-amino-acid polypeptide reads, in one-letter code: Bifunctional decalin synthase calF (575 aa).

Residues 1-18 (MSFKPLLLSLSLLSPALG) form the signal peptide. N-linked (GlcNAc...) asparagine glycosylation is found at N46, N103, N127, N175, N268, N308, N359, N425, and N485. Positions 118 to 297 (LGNYASYSIN…LSMTTKVFQD (180 aa)) constitute an FAD-binding PCMH-type domain.

This sequence belongs to the oxygen-dependent FAD-linked oxidoreductase family.

It participates in secondary metabolite biosynthesis. In terms of biological role, bifunctional decaline synthase; part of the gene cluster that mediates the biosynthesis of calbistrin A and related compounds. Calbistrin A is a secondary metabolite with an interesting structure that was recently found to have bioactivity against leukemia cells. It consists of two polyketides linked by an ester bond: a bicyclic decalin containing polyketide and a linear 12 carbon dioic acid structure. The polyketide synthase calA is probably responsible for forming the decalin moiety. Because calA lacks a designated enoylreductase (ER) domain, the required activity is provided by the trans-enoyl reductase calK. Following release from the PKS, calF then probably catalyzes the oxidation and the subsequent Diels Alder cycloisomerization that lead to the formation of the decalin moiety. The decalin polyketide backbone includes two C-methyl groups, at C7 and C11 in backbone, of which the C7 position is probably methylated by the methyltransferase domain of calA. A candidate for adding the methyl group at C11, if not done by CalA, is the cluster methyltransferase calH. Several additional tailoring enzymes within the cluster could be involved in the modification of the decalin polyketide product. Those include the 3 cytochrome P450 monooxygenases CalE, CalG and CalL, of which one might be responsible for the introduction of the extra hydroxyl group attached to the backbone of the decalin moiety, at position C9 in the backbone, that allows for attachment of the linear moiety. One tailoring enzyme activity that is expected to be involved in biosynthesis of calbistrin is an acyltransferase for connecting the two polyketide synthase products, and which could be performed by the cluster acyltransferase calJ. The enzyme responsible for the biosynthesis of the linear moiety, probably a second PKS, has not been identified yet. The protein is Bifunctional decalin synthase calF of Penicillium decumbens.